Reading from the N-terminus, the 592-residue chain is Inactive metallocarboxypeptidase ECM14 (592 aa).

The N-terminal stretch at methionine 1 to alanine 21 is a signal peptide. A propeptide spanning residues isoleucine 22–serine 174 is cleaved from the precursor. Polar residues predominate over residues serine 170–threonine 179. Positions serine 170–serine 191 are disordered. Positions aspartate 202 to leucine 521 constitute a Peptidase M14 domain. Zn(2+)-binding residues include histidine 264 and glutamate 267. Residues histidine 264–glutamate 267, arginine 322, and aspartate 339–arginine 340 each bind substrate. A disulfide bond links cysteine 333 and cysteine 356. N-linked (GlcNAc...) asparagine glycosylation occurs at asparagine 349. Histidine 396 serves as a coordination point for Zn(2+). Serine 397–tyrosine 398 contacts substrate. The disordered stretch occupies residues alanine 542 to arginine 592. The span at aspartate 548 to glycine 558 shows a compositional bias: acidic residues. Basic and acidic residues predominate over residues glutamine 559–asparagine 575.

Belongs to the peptidase M14 family. Requires Zn(2+) as cofactor.

Its subcellular location is the vacuole. It is found in the secreted. In terms of biological role, inactive carboxypeptidase that may play a role in cell wall organization and biogenesis. The sequence is that of Inactive metallocarboxypeptidase ECM14 (ECM14) from Ajellomyces dermatitidis (strain ER-3 / ATCC MYA-2586) (Blastomyces dermatitidis).